A 357-amino-acid chain; its full sequence is GPI mannosyltransferase 2 (357 aa).

The next 8 membrane-spanning stretches (helical) occupy residues 6-26 (TLIVVFVAIKAYLVALALVVP), 86-106 (AIAYTAIAVSSLSHLLAALML), 128-148 (ILSPAGIFLVAGYTESLFALL), 167-187 (VLGASCLLRGNGLLWGIPFLF), 201-221 (GVSVVIGGSLVGAVFLYTQYL), 257-277 (YWTANNIPNFLFAAPVLYLMY), 286-306 (LVPFYTVHAIMGLACVFMWHV), and 334-354 (YVVRYIFVWITFQVVMWGAYL).

It belongs to the PIGV family.

It localises to the endoplasmic reticulum membrane. It functions in the pathway glycolipid biosynthesis; glycosylphosphatidylinositol-anchor biosynthesis. In terms of biological role, mannosyltransferase involved in glycosylphosphatidylinositol-anchor biosynthesis. Transfers the second mannose to the glycosylphosphatidylinositol during GPI precursor assembly. The polypeptide is GPI mannosyltransferase 2 (GPI18) (Yarrowia lipolytica (strain CLIB 122 / E 150) (Yeast)).